The chain runs to 244 residues: ATP synthase subunit 4, mitochondrial (244 aa).

The N-terminal 36 residues, 1-36, are a transit peptide targeting the mitochondrion; sequence MSSKLFCLRSFPSVQRTAWQRLVLPSTRKFSLTPTT.

Belongs to the eukaryotic ATPase B chain family. F-type ATPases have 2 components, CF(1) - the catalytic core - and CF(0) - the membrane proton channel. In yeast, the dimeric form of ATP synthase consists of 17 polypeptides: alpha, beta, gamma, delta, epsilon, 4 (B), 5 (OSCP), 6 (A), 8, 9 (C), d, E (Tim11), f, g, h, i/j and k.

Its subcellular location is the mitochondrion. It localises to the mitochondrion inner membrane. Mitochondrial membrane ATP synthase (F(1)F(0) ATP synthase or Complex V) produces ATP from ADP in the presence of a proton gradient across the membrane which is generated by electron transport complexes of the respiratory chain. F-type ATPases consist of two structural domains, F(1) - containing the extramembraneous catalytic core, and F(0) - containing the membrane proton channel, linked together by a central stalk and a peripheral stalk. During catalysis, ATP synthesis in the catalytic domain of F(1) is coupled via a rotary mechanism of the central stalk subunits to proton translocation. Part of the complex F(0) domain and the peripheric stalk, which acts as a stator to hold the catalytic alpha(3)beta(3) subcomplex and subunit a/ATP6 static relative to the rotary elements. This chain is ATP synthase subunit 4, mitochondrial (atp4), found in Schizosaccharomyces pombe (strain 972 / ATCC 24843) (Fission yeast).